Reading from the N-terminus, the 467-residue chain is 3-isopropylmalate dehydratase large subunit (467 aa).

Residues cysteine 347, cysteine 408, and cysteine 411 each coordinate [4Fe-4S] cluster.

The protein belongs to the aconitase/IPM isomerase family. LeuC type 1 subfamily. As to quaternary structure, heterodimer of LeuC and LeuD. [4Fe-4S] cluster serves as cofactor.

The enzyme catalyses (2R,3S)-3-isopropylmalate = (2S)-2-isopropylmalate. The protein operates within amino-acid biosynthesis; L-leucine biosynthesis; L-leucine from 3-methyl-2-oxobutanoate: step 2/4. Functionally, catalyzes the isomerization between 2-isopropylmalate and 3-isopropylmalate, via the formation of 2-isopropylmaleate. This chain is 3-isopropylmalate dehydratase large subunit, found in Bordetella pertussis (strain Tohama I / ATCC BAA-589 / NCTC 13251).